The chain runs to 337 residues: DNA-directed RNA polymerase subunit alpha (337 aa).

The tract at residues 1-233 (MIQKNWQELI…DQLALFINFK (233 aa)) is alpha N-terminal domain (alpha-NTD). The tract at residues 249 to 337 (FNPALLKKVD…DLAKRYEDQY (89 aa)) is alpha C-terminal domain (alpha-CTD).

Belongs to the RNA polymerase alpha chain family. In terms of assembly, homodimer. The RNAP catalytic core consists of 2 alpha, 1 beta, 1 beta' and 1 omega subunit. When a sigma factor is associated with the core the holoenzyme is formed, which can initiate transcription.

The enzyme catalyses RNA(n) + a ribonucleoside 5'-triphosphate = RNA(n+1) + diphosphate. Its function is as follows. DNA-dependent RNA polymerase catalyzes the transcription of DNA into RNA using the four ribonucleoside triphosphates as substrates. This is DNA-directed RNA polymerase subunit alpha from Bartonella henselae (strain ATCC 49882 / DSM 28221 / CCUG 30454 / Houston 1) (Rochalimaea henselae).